The sequence spans 117 residues: Prefoldin subunit beta (117 aa).

Belongs to the prefoldin subunit beta family. As to quaternary structure, heterohexamer of two alpha and four beta subunits.

The protein localises to the cytoplasm. Functionally, molecular chaperone capable of stabilizing a range of proteins. Seems to fulfill an ATP-independent, HSP70-like function in archaeal de novo protein folding. The protein is Prefoldin subunit beta of Methanococcoides burtonii (strain DSM 6242 / NBRC 107633 / OCM 468 / ACE-M).